Consider the following 199-residue polypeptide: uncharacterized protein (199 aa).

The disordered stretch occupies residues 1-41 (MKFKRDENQNSTHHRGNKNNTNNDDDDKEEEEEIINDTTMP). Acidic residues predominate over residues 23–35 (NDDDDKEEEEEII). 3 helical membrane passes run 73–93 (LILD…FAFW), 96–116 (ISTY…VSFL), and 166–186 (IAIA…SPYL).

It localises to the membrane. This is an uncharacterized protein from Dictyostelium discoideum (Social amoeba).